Reading from the N-terminus, the 523-residue chain is 2-isopropylmalate synthase (523 aa).

In terms of domain architecture, Pyruvate carboxyltransferase spans 5-267 (VIIFDTTLRD…HTAINHQEIW (263 aa)). Mn(2+) contacts are provided by aspartate 14, histidine 202, histidine 204, and asparagine 238. A regulatory domain region spans residues 392 to 523 (RLDYFSVQSG…QHNENNKETV (132 aa)).

Belongs to the alpha-IPM synthase/homocitrate synthase family. LeuA type 1 subfamily. Homodimer. Mn(2+) is required as a cofactor.

The protein resides in the cytoplasm. It carries out the reaction 3-methyl-2-oxobutanoate + acetyl-CoA + H2O = (2S)-2-isopropylmalate + CoA + H(+). The protein operates within amino-acid biosynthesis; L-leucine biosynthesis; L-leucine from 3-methyl-2-oxobutanoate: step 1/4. In terms of biological role, catalyzes the condensation of the acetyl group of acetyl-CoA with 3-methyl-2-oxobutanoate (2-ketoisovalerate) to form 3-carboxy-3-hydroxy-4-methylpentanoate (2-isopropylmalate). This chain is 2-isopropylmalate synthase, found in Escherichia coli (strain SMS-3-5 / SECEC).